A 204-amino-acid chain; its full sequence is Putative AgrB-like protein (204 aa).

4 consecutive transmembrane segments (helical) span residues 40–60 (IILI…ATGL), 87–107 (LNCT…FQNI), 111–131 (NWIV…FAPA), and 156–176 (LILT…LIMV).

Belongs to the AgrB family.

It is found in the cell membrane. Its function is as follows. May be involved in the proteolytic processing of a quorum sensing system signal molecule precursor. This is Putative AgrB-like protein from Listeria welshimeri serovar 6b (strain ATCC 35897 / DSM 20650 / CCUG 15529 / CIP 8149 / NCTC 11857 / SLCC 5334 / V8).